Here is an 810-residue protein sequence, read N- to C-terminus: Eukaryotic translation initiation factor 3 subunit C (810 aa).

A compositionally biased stretch (polar residues) spans 1-11; that stretch reads MSRFFATNYNY. The segment at 1–98 is disordered; the sequence is MSRFFATNYN…DSDESDEEDG (98 aa). The segment covering 12 to 33 has biased composition (low complexity); the sequence is DETSSSSEEDLLSSSEELLSSS. The segment covering 34–58 has biased composition (acidic residues); sequence EEGELSDDSLFNDESESESDFDSDD. Residues 605-780 enclose the PCI domain; the sequence is YHQHINLDLV…TYIVIEKGDE (176 aa).

This sequence belongs to the eIF-3 subunit C family. As to quaternary structure, component of the eukaryotic translation initiation factor 3 (eIF-3) complex.

The protein resides in the cytoplasm. In terms of biological role, component of the eukaryotic translation initiation factor 3 (eIF-3) complex, which is involved in protein synthesis of a specialized repertoire of mRNAs and, together with other initiation factors, stimulates binding of mRNA and methionyl-tRNAi to the 40S ribosome. The eIF-3 complex specifically targets and initiates translation of a subset of mRNAs involved in cell proliferation. This Candida glabrata (strain ATCC 2001 / BCRC 20586 / JCM 3761 / NBRC 0622 / NRRL Y-65 / CBS 138) (Yeast) protein is Eukaryotic translation initiation factor 3 subunit C.